A 748-amino-acid chain; its full sequence is 5-methyltetrahydropteroyltriglutamate--homocysteine methyltransferase (748 aa).

5-methyltetrahydropteroyltri-L-glutamate is bound by residues 18–21 (REWK) and Lys-112. Residues 420–422 (IGS) and Glu-473 contribute to the L-homocysteine site. L-methionine contacts are provided by residues 420-422 (IGS) and Glu-473. Trp-550 is a binding site for 5-methyltetrahydropteroyltri-L-glutamate. Asp-588 is a binding site for L-homocysteine. Residue Asp-588 participates in L-methionine binding. Glu-594 contacts 5-methyltetrahydropteroyltri-L-glutamate. Positions 630, 632, and 654 each coordinate Zn(2+). The active-site Proton donor is His-683. Cys-715 provides a ligand contact to Zn(2+).

This sequence belongs to the vitamin-B12 independent methionine synthase family. Zn(2+) is required as a cofactor.

It carries out the reaction 5-methyltetrahydropteroyltri-L-glutamate + L-homocysteine = tetrahydropteroyltri-L-glutamate + L-methionine. Its pathway is amino-acid biosynthesis; L-methionine biosynthesis via de novo pathway; L-methionine from L-homocysteine (MetE route): step 1/1. In terms of biological role, catalyzes the transfer of a methyl group from 5-methyltetrahydrofolate to homocysteine resulting in methionine formation. The sequence is that of 5-methyltetrahydropteroyltriglutamate--homocysteine methyltransferase from Staphylococcus epidermidis (strain ATCC 35984 / DSM 28319 / BCRC 17069 / CCUG 31568 / BM 3577 / RP62A).